Consider the following 140-residue polypeptide: Large ribosomal subunit protein bL17 (140 aa).

The segment at 119–140 is disordered; the sequence is DTTAKGQDSGPVQVEEQENEEA.

The protein belongs to the bacterial ribosomal protein bL17 family. In terms of assembly, part of the 50S ribosomal subunit. Contacts protein L32.

The chain is Large ribosomal subunit protein bL17 from Zymomonas mobilis subsp. mobilis (strain ATCC 31821 / ZM4 / CP4).